The chain runs to 350 residues: MVASSQKILVTGSAGFIGTHTVVQLLNNGFNVSIIDNFDNSVMEAVERVREVVGSNLSQNLEFTLGDLRNKDDLEKLFSKSKFDAVIHFAGLKAVGESVENPRRYFDNNLVGTINLYEVMAKHNCKKMVFSSSATVYGQPEKIPCVEDFKLQAMNPYGRTKLFLEEIARDIQKAEPEWRIVLLRYFNPVGAHESGKLGEDPRGIPNNLMPYIQQVAVGRLPELNVYGHDYPTRDGSAIRDYIHVMDLADGHIAALRKLFTSENIGCTAYNLGTGRGSSVLEMVAAFEKASGKKIALKLCPRRPGDATEVYASTAKAEKELGWKAKYGVEEMCRDQWNWAKNNPWGYSGKP.

7–38 (KILVTGSAGFIGTHTVVQLLNNGFNVSIIDNF) serves as a coordination point for NAD(+). Serine 133 is a substrate binding site. Residue tyrosine 157 is the Proton acceptor of the active site.

Belongs to the NAD(P)-dependent epimerase/dehydratase family. The cofactor is NAD(+).

The catalysed reaction is UDP-alpha-D-glucose = UDP-alpha-D-galactose. The protein operates within carbohydrate metabolism; galactose metabolism. This is UDP-glucose 4-epimerase (GALE) from Pisum sativum (Garden pea).